The primary structure comprises 273 residues: Pantothenate synthetase (273 aa).

27–34 (MGALHDGH) provides a ligand contact to ATP. His34 (proton donor) is an active-site residue. Gln58 provides a ligand contact to (R)-pantoate. Gln58 lines the beta-alanine pocket. 144-147 (GKKD) is a binding site for ATP. Gln150 provides a ligand contact to (R)-pantoate. ATP contacts are provided by residues Val173 and 181 to 184 (LSSR).

This sequence belongs to the pantothenate synthetase family. Homodimer.

The protein resides in the cytoplasm. The enzyme catalyses (R)-pantoate + beta-alanine + ATP = (R)-pantothenate + AMP + diphosphate + H(+). It participates in cofactor biosynthesis; (R)-pantothenate biosynthesis; (R)-pantothenate from (R)-pantoate and beta-alanine: step 1/1. Catalyzes the condensation of pantoate with beta-alanine in an ATP-dependent reaction via a pantoyl-adenylate intermediate. In Campylobacter concisus (strain 13826), this protein is Pantothenate synthetase.